The following is a 316-amino-acid chain: MATFHTVRDAVKLFDAGISGGKHLNKGQEEGVLVEETNLCLWNKEVNKLKEKIKNAVKTKIEALLELEEAKKTVEQLSQELGIKRNMINDEKDLDLSSSVRVVTSELGVAKESIHRVAEEESELCMLMESLKLELQNVEKAHSELKEIEQRERDHQAIEDLKKETKDAKTQLSLLEEELKIAVFEAQEAKDAEEHARERLNVAVLESDFRSLAVVKESAAEELTETEALRACRDETLKTLEMSEREIEDIKAATQDALKKAEMAQEATIVVDVELKRRRKAASRILAESKMCAKSTKEVLKSKPRSSSKEGCLVKC.

3 coiled-coil regions span residues 42–90, 119–195, and 233–266; these read WNKE…MIND, EEES…AEEH, and RDET…MAQE. Positions 295 to 316 are disordered; sequence STKEVLKSKPRSSSKEGCLVKC.

It belongs to the WEB family.

This chain is WEB family protein At3g13190, found in Arabidopsis thaliana (Mouse-ear cress).